A 42-amino-acid polypeptide reads, in one-letter code: MMYPKNLPAGADTLIGMVGAISLTVMMILFFIAIVWFLQGTR.

The chain crosses the membrane as a helical span at residues 18–38; the sequence is VGAISLTVMMILFFIAIVWFL.

The protein localises to the host membrane. This is an uncharacterized protein from His1 virus (isolate Australia/Victoria) (His1V).